Here is a 1009-residue protein sequence, read N- to C-terminus: Kinesin-like protein KIN-5C (1009 aa).

The 348-residue stretch at 12–359 folds into the Kinesin motor domain; that stretch reads NVQVLLRCRP…LDYAHRAKNI (348 aa). 98–105 serves as a coordination point for ATP; that stretch reads GQTGTGKT. Residues 406–526 adopt a coiled-coil conformation; that stretch reads YQEESERKVM…NSSLHQKIGR (121 aa). Disordered stretches follow at residues 862–882 and 987–1009; these read SNEQ…KDVT and YESF…SQVN. Composition is skewed to basic and acidic residues over residues 863 to 882 and 987 to 996; these read NEQH…KDVT and YESFATKETK. The segment covering 997–1009 has biased composition (polar residues); sequence PQQLTRSPLSQVN.

The protein belongs to the TRAFAC class myosin-kinesin ATPase superfamily. Kinesin family. KIN-5/BimC subfamily.

It localises to the cytoplasm. Its subcellular location is the cytoskeleton. The protein resides in the spindle. In terms of biological role, responsible for microtubule translocation. May be important for the organization of phragmoplast-specific arrays of microtubules. Plays an essential role in stabilizing the mitotic spindle. Required during mitotic cytokinesis. This Arabidopsis thaliana (Mouse-ear cress) protein is Kinesin-like protein KIN-5C.